The primary structure comprises 93 residues: MDKLKNQVITGKSIRLLQQNQYTFQVDLKLTKTGMKDWIERFFDVKVEGINSSRMTSKNGKKKNKLNITYVSYKKMIVRLKKNYFIPLFMSQT.

This sequence belongs to the universal ribosomal protein uL23 family. In terms of assembly, part of the 50S ribosomal subunit.

Its subcellular location is the plastid. It localises to the chloroplast. In terms of biological role, binds to 23S rRNA. The chain is Large ribosomal subunit protein uL23c (rpl23) from Adiantum capillus-veneris (Maidenhair fern).